The chain runs to 86 residues: Protein Tat (86 aa).

Residues 1–21 form a disordered region; that stretch reads MDPVDPNIEPWNHPGSQPKTA. Residues 1 to 24 are interaction with human CREBBP; sequence MDPVDPNIEPWNHPGSQPKTACNR. A transactivation region spans residues 1–48; it reads MDPVDPNIEPWNHPGSQPKTACNRCHCKKCCYHCQVCFITKGLGISYG. Residues C22, C25, and C27 each coordinate Zn(2+). A cysteine-rich region spans residues 22 to 37; it reads CNRCHCKKCCYHCQVC. K28 carries the N6-acetyllysine; by host PCAF modification. 4 residues coordinate Zn(2+): C30, H33, C34, and C37. Residues 38–48 form a core region; the sequence is FITKGLGISYG. The tract at residues 47-86 is disordered; it reads YGRKKRRQRRRPSQGGQTHQDPIPKQPSSQPRGDPTGPKE. Residues 48–58 show a composition bias toward basic residues; it reads GRKKRRQRRRP. A Nuclear localization signal, RNA-binding (TAR), and protein transduction motif is present at residues 49–57; the sequence is RKKRRQRRR. Residues 49 to 86 form an interaction with the host capping enzyme RNGTT region; that stretch reads RKKRRQRRRPSQGGQTHQDPIPKQPSSQPRGDPTGPKE. An N6-acetyllysine; by host EP300 and GCN5L2 mark is found at K50 and K51. Asymmetric dimethylarginine; by host PRMT6 occurs at positions 52 and 53. Residues 60–77 are compositionally biased toward polar residues; that stretch reads QGGQTHQDPIPKQPSSQP. Residue K71 forms a Glycyl lysine isopeptide (Lys-Gly) (interchain with G-Cter in ubiquitin) linkage. Residues 78 to 80 carry the Cell attachment site motif; it reads RGD.

Belongs to the lentiviruses Tat family. In terms of assembly, interacts with host CCNT1. Associates with the P-TEFb complex composed at least of Tat, P-TEFb (CDK9 and CCNT1), TAR RNA, RNA Pol II. Recruits the HATs CREBBP, TAF1/TFIID, EP300, PCAF and GCN5L2. Interacts with host KAT5/Tip60; this interaction targets the latter to degradation. Interacts with the host deacetylase SIRT1. Interacts with host capping enzyme RNGTT; this interaction stimulates RNGTT. Binds to host KDR, and to the host integrins ITGAV/ITGB3 and ITGA5/ITGB1. Interacts with host KPNB1/importin beta-1 without previous binding to KPNA1/importin alpha-1. Interacts with EIF2AK2. Interacts with host nucleosome assembly protein NAP1L1; this interaction may be required for the transport of Tat within the nucleus, since the two proteins interact at the nuclear rim. Interacts with host C1QBP/SF2P32; this interaction involves lysine-acetylated Tat. Interacts with the host chemokine receptors CCR2, CCR3 and CXCR4. Interacts with host DPP4/CD26; this interaction may trigger an anti-proliferative effect. Interacts with host LDLR. Interacts with the host extracellular matrix metalloproteinase MMP1. Interacts with host PRMT6; this interaction mediates Tat's methylation. Interacts with, and is ubiquitinated by MDM2/Hdm2. Interacts with host PSMC3 and HTATIP2. Interacts with STAB1; this interaction may overcome SATB1-mediated repression of IL2 and IL2RA (interleukin) in T cells by binding to the same domain than HDAC1. Interacts (when acetylated) with human CDK13, thereby increasing HIV-1 mRNA splicing and promoting the production of the doubly spliced HIV-1 protein Nef. Interacts with host TBP; this interaction modulates the activity of transcriptional pre-initiation complex. Interacts with host RELA. Interacts with host PLSCR1; this interaction negatively regulates Tat transactivation activity by altering its subcellular distribution. Asymmetrical arginine methylation by host PRMT6 seems to diminish the transactivation capacity of Tat and affects the interaction with host CCNT1. In terms of processing, acetylation by EP300, CREBBP, GCN5L2/GCN5 and PCAF regulates the transactivation activity of Tat. EP300-mediated acetylation of Lys-50 promotes dissociation of Tat from the TAR RNA through the competitive binding to PCAF's bromodomain. In addition, the non-acetylated Tat's N-terminus can also interact with PCAF. PCAF-mediated acetylation of Lys-28 enhances Tat's binding to CCNT1. Lys-50 is deacetylated by SIRT1. Post-translationally, polyubiquitination by host MDM2 does not target Tat to degradation, but activates its transactivation function and fosters interaction with CCNT1 and TAR RNA. Phosphorylated by EIF2AK2 on serine and threonine residues adjacent to the basic region important for TAR RNA binding and function. Phosphorylation of Tat by EIF2AK2 is dependent on the prior activation of EIF2AK2 by dsRNA.

Its subcellular location is the host nucleus. The protein resides in the host nucleolus. It localises to the host cytoplasm. It is found in the secreted. Functionally, transcriptional activator that increases RNA Pol II processivity, thereby increasing the level of full-length viral transcripts. Recognizes a hairpin structure at the 5'-LTR of the nascent viral mRNAs referred to as the transactivation responsive RNA element (TAR) and recruits the cyclin T1-CDK9 complex (P-TEFb complex) that will in turn hyperphosphorylate the RNA polymerase II to allow efficient elongation. The CDK9 component of P-TEFb and other Tat-activated kinases hyperphosphorylate the C-terminus of RNA Pol II that becomes stabilized and much more processive. Other factors such as HTATSF1/Tat-SF1, SUPT5H/SPT5, and HTATIP2 are also important for Tat's function. Besides its effect on RNA Pol II processivity, Tat induces chromatin remodeling of proviral genes by recruiting the histone acetyltransferases (HATs) CREBBP, EP300 and PCAF to the chromatin. This also contributes to the increase in proviral transcription rate, especially when the provirus integrates in transcriptionally silent region of the host genome. To ensure maximal activation of the LTR, Tat mediates nuclear translocation of NF-kappa-B by interacting with host RELA. Through its interaction with host TBP, Tat may also modulate transcription initiation. Tat can reactivate a latently infected cell by penetrating in it and transactivating its LTR promoter. In the cytoplasm, Tat is thought to act as a translational activator of HIV-1 mRNAs. In terms of biological role, extracellular circulating Tat can be endocytosed by surrounding uninfected cells via the binding to several surface receptors such as CD26, CXCR4, heparan sulfate proteoglycans (HSPG) or LDLR. Neurons are rarely infected, but they internalize Tat via their LDLR. Through its interaction with nuclear HATs, Tat is potentially able to control the acetylation-dependent cellular gene expression. Modulates the expression of many cellular genes involved in cell survival, proliferation or in coding for cytokines or cytokine receptors. Tat plays a role in T-cell and neurons apoptosis. Tat induced neurotoxicity and apoptosis probably contribute to neuroAIDS. Circulating Tat also acts as a chemokine-like and/or growth factor-like molecule that binds to specific receptors on the surface of the cells, affecting many cellular pathways. In the vascular system, Tat binds to ITGAV/ITGB3 and ITGA5/ITGB1 integrins dimers at the surface of endothelial cells and competes with bFGF for heparin-binding sites, leading to an excess of soluble bFGF. The protein is Protein Tat of Human immunodeficiency virus type 1 group M subtype D (isolate Z2/CDC-Z34) (HIV-1).